The chain runs to 160 residues: Large ribosomal subunit protein uL22c (160 aa).

The protein belongs to the universal ribosomal protein uL22 family. In terms of assembly, part of the 50S ribosomal subunit.

The protein localises to the plastid. It localises to the chloroplast. This protein binds specifically to 23S rRNA. Functionally, the globular domain of the protein is located near the polypeptide exit tunnel on the outside of the subunit, while an extended beta-hairpin is found that lines the wall of the exit tunnel in the center of the 70S ribosome. The sequence is that of Large ribosomal subunit protein uL22c (rpl22) from Arabidopsis thaliana (Mouse-ear cress).